The primary structure comprises 611 residues: Chaperone protein DnaK (611 aa).

The residue at position 173 (threonine 173) is a Phosphothreonine; by autocatalysis. Residues alanine 579–alanine 592 are compositionally biased toward low complexity. The segment at alanine 579 to asparagine 598 is disordered.

It belongs to the heat shock protein 70 family.

Acts as a chaperone. The chain is Chaperone protein DnaK from Bacillus cereus (strain AH187).